The chain runs to 257 residues: Phosphatidylglycerol--prolipoprotein diacylglyceryl transferase (257 aa).

The next 4 membrane-spanning stretches (helical) occupy residues 8–28 (IFGL…ILAY), 48–68 (VFIV…VIFN), 84–104 (EGGL…YLMS), and 109–129 (LNFL…QAIG). Position 130 (arginine 130) interacts with a 1,2-diacyl-sn-glycero-3-phospho-(1'-sn-glycerol). 3 helical membrane-spanning segments follow: residues 169–189 (PTFL…LLIT), 196–216 (GSIF…IEGL), and 225–245 (SLRM…ILII).

This sequence belongs to the Lgt family.

The protein localises to the cell membrane. It carries out the reaction L-cysteinyl-[prolipoprotein] + a 1,2-diacyl-sn-glycero-3-phospho-(1'-sn-glycerol) = an S-1,2-diacyl-sn-glyceryl-L-cysteinyl-[prolipoprotein] + sn-glycerol 1-phosphate + H(+). The protein operates within protein modification; lipoprotein biosynthesis (diacylglyceryl transfer). Functionally, catalyzes the transfer of the diacylglyceryl group from phosphatidylglycerol to the sulfhydryl group of the N-terminal cysteine of a prolipoprotein, the first step in the formation of mature lipoproteins. The protein is Phosphatidylglycerol--prolipoprotein diacylglyceryl transferase of Clostridium novyi (strain NT).